Reading from the N-terminus, the 223-residue chain is uncharacterized protein (223 aa).

Positions 11-71 constitute an HTH tetR-type domain; that stretch reads EATFESFIDA…YLLEKRQMKK (61 aa). The segment at residues 34–53 is a DNA-binding region (H-T-H motif); the sequence is SVEDISRAAGYSKGAFYVHF.

This is an uncharacterized protein from Bacillus subtilis (strain 168).